A 225-amino-acid chain; its full sequence is Helicostatins (225 aa).

The signal sequence occupies residues 1-18 (MLYSSLPVCFLVLGAALC). Positions 19 to 48 (APERMQNEAEPHDLQPHEAEPHSDHVAPLA) are excised as a propeptide. Leucine amide is present on residues Leu-58, Leu-79, and Leu-90. Positions 94-127 (SVDEDQSNDEQQLTTSDLDQAALAELFDQYDDAE) are excised as a propeptide. Leu-137 bears the Leucine amide mark. Residues 141–149 (FADDETSEE) constitute a propeptide that is removed on maturation. 5 positions are modified to leucine amide: Leu-159, Leu-170, Leu-181, Leu-192, and Leu-206. The tract at residues 205 to 225 (GLGKRSGDDVSADDSDNYFDV) is disordered. A propeptide spanning residues 210 to 225 (SGDDVSADDSDNYFDV) is cleaved from the precursor. Residues 214-225 (VSADDSDNYFDV) show a composition bias toward acidic residues.

This sequence belongs to the allatostatin family. As to expression, highly expressed in the CNS and gut of larvae. Also expressed in the cells of the larval brain and ventral nerve cord and in endocrine cells of the midgut.

It localises to the secreted. Its function is as follows. May act as a neurotransmitter or neuromodulator. The sequence is that of Helicostatins from Helicoverpa armigera (Cotton bollworm).